A 1491-amino-acid chain; its full sequence is Terminal uridylyltransferase 7 (1491 aa).

At threonine 64 the chain carries Phosphothreonine. Serine 132 and serine 172 each carry phosphoserine. Residues 165–203 (MSEMEAGSPENKKQRSRPRKPRRTRTEDSEQDGDLDGPV) form a disordered region. A compositionally biased stretch (basic residues) spans 178-187 (QRSRPRKPRR). The Matrin-type zinc-finger motif lies at 244–274 (YTCKLCDALIDSIPFAHKHIKEKRHKKNLKE). Residues 551–600 (VGQLWVELLRFYALEFNLADLVISIRVKELISRESKDWPKKRIAIEDPYS) form the PAP-associated 1 domain. Phosphoserine is present on residues serine 600 and serine 747. 2 disordered regions span residues 740 to 774 (AELPETGSDNEEVRRKTKHPLSTDDQGLSSSKHPE) and 834 to 911 (QSRT…CGEN). The segment covering 844-857 (DDEEEEEEEEEEEE) has biased composition (acidic residues). Threonine 865 carries the post-translational modification Phosphothreonine. Residues 885-897 (GEEDALSEEDDLA) show a composition bias toward acidic residues. At serine 891 the chain carries Phosphoserine. Positions 947–1491 (RKLTFTKGKS…ASVKRTQQES (545 aa)) are sufficient for monouridylation activity. A CCHC-type 1 zinc finger spans residues 959–976 (VVCSLCKREGHLKKDCPE). UTP-binding positions include 1043-1046 (SSKN), 1053-1056 (SDLD), asparagine 1126, lysine 1148, 1166-1170 (SYAYT), and histidine 1282. Residues aspartate 1054 and aspartate 1056 each contribute to the Mg(2+) site. The region spanning 1230 to 1282 (VGQLWLGLLRFYTEEFDFKEHVISIRRKSLLTTFKKQWTSKYIVIEDPFDLNH) is the PAP-associated 2 domain. The segment at 1341–1358 (RCCRICGKIGHFMKDCPM) adopts a CCHC-type 2 zinc-finger fold. Disordered regions lie at residues 1362-1399 (VRRRRDQEDTPNQRYSESKEKRSKEDKEIQNKYTEKEV) and 1463-1491 (PQFKGSPGSLSSKYMTQGRASVKRTQQES). Over residues 1377 to 1399 (SESKEKRSKEDKEIQNKYTEKEV) the composition is skewed to basic and acidic residues. The CCHC-type 3 zinc finger occupies 1447 to 1464 (KRCFICGREGHIKKECPQ). The span at 1470–1481 (GSLSSKYMTQGR) shows a compositional bias: polar residues.

The protein belongs to the DNA polymerase type-B-like family. The cofactor is Mg(2+). It depends on Mn(2+) as a cofactor.

It localises to the cytoplasm. The catalysed reaction is RNA(n) + UTP = RNA(n)-3'-uridine ribonucleotide + diphosphate. Functionally, uridylyltransferase that mediates the terminal uridylation of mRNAs with short (less than 25 nucleotides) poly(A) tails, hence facilitating global mRNA decay. Essential for both oocyte maturation and fertility. Through 3' terminal uridylation of mRNA, sculpts, with TUT7, the maternal transcriptome by eliminating transcripts during oocyte growth. Involved in microRNA (miRNA)-induced gene silencing through uridylation of deadenylated miRNA targets. Also acts as a suppressor of miRNA biogenesis by mediating the terminal uridylation of miRNA precursors, including that of let-7 (pre-let-7). Uridylated pre-let-7 RNA is not processed by Dicer and undergo degradation. Pre-let-7 uridylation is strongly enhanced in the presence of LIN28A. Due to functional redundancy between ZCCHC6 and ZCCHC11, the identification of the specific role of each of these proteins is difficult. Involved in microRNA (miRNA)-induced gene silencing through uridylation of deadenylated miRNA targets. Also functions as an integral regulator of microRNA biogenesiS using 3 different uridylation mechanisms. Acts as a suppressor of miRNA biogenesis by mediating the terminal uridylation of some miRNA precursors, including that of let-7 (pre-let-7). Uridylated pre-let-7 RNA is not processed by Dicer and undergo degradation. Pre-let-7 oligouridylation is strongly enhanced in the presence of LIN28A. In the absence of LIN28A, TUT7 and TUT4 monouridylate group II pre-miRNAs, which includes most of pre-let7 members, that shapes an optimal 3' end overhang for efficient processing. Add oligo-U tails to truncated pre-miRNAS with a 5' overhang which may promote rapid degradation of non-functional pre-miRNA species. Does not play a role in replication-dependent histone mRNA degradation. Due to functional redundancy between TUT4 and TUT7, the identification of the specific role of each of these proteins is difficult. TUT4 and TUT7 restrict retrotransposition of long interspersed element-1 (LINE-1) in cooperation with MOV10 counteracting the RNA chaperonne activity of L1RE1. TUT7 uridylates LINE-1 mRNAs in the cytoplasm which inhibits initiation of reverse transcription once in the nucleus, whereas uridylation by TUT4 destabilizes mRNAs in cytoplasmic ribonucleoprotein granules. In Mus musculus (Mouse), this protein is Terminal uridylyltransferase 7.